The primary structure comprises 329 residues: Sulfate/thiosulfate import ATP-binding protein CysA (329 aa).

In terms of domain architecture, ABC transporter spans 3–237 (IEVRNVSKRF…PANDFVYHFL (235 aa)). 35–42 (GPSGCGKT) is a binding site for ATP.

Belongs to the ABC transporter superfamily. Sulfate/tungstate importer (TC 3.A.1.6) family. The complex is composed of two ATP-binding proteins (CysA), two transmembrane proteins (CysT and CysW) and a solute-binding protein (CysP).

The protein resides in the cell inner membrane. It carries out the reaction sulfate(out) + ATP + H2O = sulfate(in) + ADP + phosphate + H(+). The enzyme catalyses thiosulfate(out) + ATP + H2O = thiosulfate(in) + ADP + phosphate + H(+). Its function is as follows. Part of the ABC transporter complex CysAWTP involved in sulfate/thiosulfate import. Responsible for energy coupling to the transport system. The protein is Sulfate/thiosulfate import ATP-binding protein CysA of Pseudomonas putida (strain ATCC 47054 / DSM 6125 / CFBP 8728 / NCIMB 11950 / KT2440).